We begin with the raw amino-acid sequence, 36 residues long: Photosystem I reaction center subunit VIII (36 aa).

The helical transmembrane segment at isoleucine 9 to tyrosine 29 threads the bilayer.

Belongs to the PsaI family.

The protein localises to the plastid. The protein resides in the chloroplast thylakoid membrane. In terms of biological role, may help in the organization of the PsaL subunit. The protein is Photosystem I reaction center subunit VIII of Staurastrum punctulatum (Green alga).